Consider the following 217-residue polypeptide: MHFSSSARAADENFDYLFKIILIGDSNVGKTCVVQHFKSGVYTETQQNTIGVDFTVRSLDIDGKKVKMQVWDTAGQERFRTITQSYYRSAHAAIIAYDLTRRSTFESIPHWIHEIEKYGAANVVIMLIGNKCDLWEKRHVLFEDACTLAEKYGLLAVLETSAKESKNIEEVFVLMAKELIARNSLHLYGESALNGLPLDSSPVLMAQGPSEKTHCTC.

GTP-binding residues include Ser-26, Val-28, Gly-29, Lys-30, Thr-31, Cys-32, Tyr-42, Thr-43, Glu-44, Thr-45, and Thr-49. Position 31 (Thr-31) interacts with Mg(2+). The short motif at 39-54 (SGVYTETQQNTIGVDF) is the Switch 1 element. Residues Thr-49 and Asp-72 each contribute to the Mg(2+) site. Positions 74-89 (AGQERFRTITQSYYRS) match the Switch 2 motif. Gly-75, Asn-130, Lys-131, Asp-133, Ser-161, Ala-162, and Lys-163 together coordinate GTP. 2 S-geranylgeranyl cysteine lipidation sites follow: Cys-215 and Cys-217. Cys-217 is subject to Cysteine methyl ester.

This sequence belongs to the small GTPase superfamily. Rab family. The cofactor is Mg(2+).

Its subcellular location is the cell membrane. The enzyme catalyses GTP + H2O = GDP + phosphate + H(+). With respect to regulation, regulated by guanine nucleotide exchange factors (GEFs) which promote the exchange of bound GDP for free GTP. Regulated by GTPase activating proteins (GAPs) which increase the GTP hydrolysis activity. Inhibited by GDP dissociation inhibitors (GDIs). Its function is as follows. The small GTPases Rab are key regulators of intracellular membrane trafficking, from the formation of transport vesicles to their fusion with membranes. Rabs cycle between an inactive GDP-bound form and an active GTP-bound form that is able to recruit to membranes different set of downstream effectors directly responsible for vesicle formation, movement, tethering and fusion. The chain is Ras-related protein Rab-19 from Homo sapiens (Human).